A 237-amino-acid polypeptide reads, in one-letter code: Placenta-expressed transcript 1 protein (237 aa).

An N-terminal signal peptide occupies residues M1–A27. N30, N67, N103, and N136 each carry an N-linked (GlcNAc...) asparagine glycan. Residues K145 to E162 show a composition bias toward polar residues. The segment at K145–T170 is disordered. The GPI-anchor amidated serine moiety is linked to residue S218. Residues P219–F237 constitute a propeptide, removed in mature form.

Post-translationally, N-glycosylated. GPI-anchored. Present in hair follicle cells and sebaceous gland of skin, ciliated epithelial cells of trachea and bronchial tube, striated portion of submandibular gland, distal convoluted tubule cells of kidney, ciliated epithelial cells of oviduct, medulla of adrenal gland and anterior lobe of pituitary gland. Expressed in keratinocytes of the hair follicle at the trichilemmal zone corresponding to the terminally differentiated outermost suprabasal outer root sheath (ORS), including that of the sebaceous gland duct (SGD) and the directly adjacent upper distal end of the companion layer (CL). Expression is similar in all hair follicle growth stages. Also detected during both the early and late anagen phases above the bulge of stem cells. Expressed at the leading edge of the epidermal wound. Not expressed in the interfollicular epidermis (IFE), inner root sheath (IRS) and hair fiber. Highly expressed in placenta. Detected in mammary and prostate epithelia and in the pancreas (at protein level).

Its subcellular location is the apical cell membrane. Its function is as follows. Modulates leading keratinocyte migration and cellular adhesion to matrix proteins during a wound-healing response and promotes wound repair. May play a role during trichilemmal differentiation of the hair follicle. The chain is Placenta-expressed transcript 1 protein (Plet1) from Mus musculus (Mouse).